The following is an 83-amino-acid chain: Alpha-neurotoxin NTX-4 (83 aa).

The signal sequence occupies residues 1–21 (MKTLLLTLLVVTIVCLDLGYT). Disulfide bonds link cysteine 24-cysteine 45, cysteine 38-cysteine 62, cysteine 64-cysteine 75, and cysteine 76-cysteine 81.

This sequence belongs to the three-finger toxin family. Short-chain subfamily. Type I alpha-neurotoxin sub-subfamily. As to expression, expressed by the venom gland.

It localises to the secreted. Its function is as follows. Binds to muscle nicotinic acetylcholine receptor (nAChR) and inhibit acetylcholine from binding to the receptor, thereby impairing neuromuscular transmission. The chain is Alpha-neurotoxin NTX-4 from Naja sputatrix (Malayan spitting cobra).